Consider the following 449-residue polypeptide: Ribulose bisphosphate carboxylase large chain (449 aa).

Residue lysine 5 is modified to N6,N6,N6-trimethyllysine. Substrate-binding residues include asparagine 114 and threonine 164. The Proton acceptor role is filled by lysine 166. Lysine 168 provides a ligand contact to substrate. 3 residues coordinate Mg(2+): lysine 192, aspartate 194, and glutamate 195. Position 192 is an N6-carboxylysine (lysine 192). Catalysis depends on histidine 285, which acts as the Proton acceptor. The substrate site is built by arginine 286, histidine 318, and serine 370.

The protein belongs to the RuBisCO large chain family. Type I subfamily. Heterohexadecamer of 8 large chains and 8 small chains; disulfide-linked. The disulfide link is formed within the large subunit homodimers. Requires Mg(2+) as cofactor. In terms of processing, the disulfide bond which can form in the large chain dimeric partners within the hexadecamer appears to be associated with oxidative stress and protein turnover.

The protein resides in the plastid. It localises to the chloroplast. The enzyme catalyses 2 (2R)-3-phosphoglycerate + 2 H(+) = D-ribulose 1,5-bisphosphate + CO2 + H2O. It catalyses the reaction D-ribulose 1,5-bisphosphate + O2 = 2-phosphoglycolate + (2R)-3-phosphoglycerate + 2 H(+). In terms of biological role, ruBisCO catalyzes two reactions: the carboxylation of D-ribulose 1,5-bisphosphate, the primary event in carbon dioxide fixation, as well as the oxidative fragmentation of the pentose substrate in the photorespiration process. Both reactions occur simultaneously and in competition at the same active site. The protein is Ribulose bisphosphate carboxylase large chain of Zamioculcas zamiifolia (Aroid palm).